The sequence spans 119 residues: Venom allergen 2 (119 aa).

This sequence belongs to the ant venom allergen 2/4 family. Homodimer; disulfide-linked. As to expression, expressed by the venom gland.

Its subcellular location is the secreted. In Solenopsis richteri (Black imported fire ant), this protein is Venom allergen 2.